The following is a 186-amino-acid chain: uncharacterized protein (186 aa).

This is an uncharacterized protein from Haemophilus influenzae (strain ATCC 51907 / DSM 11121 / KW20 / Rd).